The primary structure comprises 337 residues: Cytidine deaminase 2 (337 aa).

2 consecutive CMP/dCMP-type deaminase domains span residues 43–164 (TDPI…FSSL) and 199–320 (LDCS…LKYL). 84 to 86 (NVD) lines the substrate pocket. Position 97 (His-97) interacts with Zn(2+). Glu-99 functions as the Proton donor in the catalytic mechanism. Zn(2+) is bound by residues Cys-132 and Cys-135.

The protein belongs to the cytidine and deoxycytidylate deaminase family. As to quaternary structure, homodimer. Zn(2+) is required as a cofactor.

It carries out the reaction cytidine + H2O + H(+) = uridine + NH4(+). The enzyme catalyses 2'-deoxycytidine + H2O + H(+) = 2'-deoxyuridine + NH4(+). In terms of biological role, this enzyme scavenges exogenous and endogenous cytidine and 2'-deoxycytidine for UMP synthesis. This is Cytidine deaminase 2 (CDA2) from Arabidopsis thaliana (Mouse-ear cress).